Reading from the N-terminus, the 350-residue chain is UDP-N-acetylenolpyruvoylglucosamine reductase (350 aa).

The 172-residue stretch at 24–195 (HVDATARWLL…VAVEFNLPLL (172 aa)) folds into the FAD-binding PCMH-type domain. R172 is a catalytic residue. The Proton donor role is filled by S245. The active site involves E342.

Belongs to the MurB family. FAD serves as cofactor.

It localises to the cytoplasm. It carries out the reaction UDP-N-acetyl-alpha-D-muramate + NADP(+) = UDP-N-acetyl-3-O-(1-carboxyvinyl)-alpha-D-glucosamine + NADPH + H(+). It participates in cell wall biogenesis; peptidoglycan biosynthesis. Cell wall formation. The sequence is that of UDP-N-acetylenolpyruvoylglucosamine reductase from Xanthomonas campestris pv. campestris (strain 8004).